A 776-amino-acid chain; its full sequence is E3 ubiquitin-protein ligase UHRF1 (776 aa).

Positions 1–78 (MWIQVRTMDG…VQLLVRQAVA (78 aa)) constitute a Ubiquitin-like domain. A disordered region spans residues 88 to 126 (AELSDSDSGCGSAQSESDKGSTHGESDVQSAGASGQTDT). Residues 93–102 (SDSGCGSAQS) are compositionally biased toward polar residues. Basic and acidic residues predominate over residues 103-113 (ESDKGSTHGES). A compositionally biased stretch (polar residues) spans 114–126 (DVQSAGASGQTDT). 2 tudor-like regions span residues 135–201 (GFYK…PRAR) and 208–277 (QLEP…IEEP). Positions 278–298 (GSAEGPGASSDSPLKKGSNGP) are disordered. A linker region spans residues 290 to 299 (PLKKGSNGPE). Residues 297 to 364 (GPECKVCKDD…DWYCPDCRND (68 aa)) form a PHD-type zinc finger. Histone H3R2me0 binding stretches follow at residues 331-335 (CDECD) and 351-353 (PDD). The 164-residue stretch at 417–580 (GPVPGVPVGT…FLVWRYLLKR (164 aa)) folds into the YDG domain. The required to promote base flipping stretch occupies residues 443-444 (HV). Residues 461-462 (AG) and Asp-467 each bind DNA. Required for formation of a 5-methylcytosine-binding pocket stretches follow at residues 464–467 (YEDD) and 476–479 (YTGS). The interval 617–660 (EKEKENKNEDDIEETPTKGKRKRKSQSMEEKSSPTKGTPKKMKV) is disordered. Ser-649 carries the phosphoserine; by CDK2 modification. An RING-type zinc finger spans residues 706 to 745 (CICCQEVVYQPITTECQHNVCRECLQRSFKAKVYTCPACR).

Phosphorylation at Ser-649 is required for gastrulation. Expressed in proliferating tissues. Highly expressed 24-48 hours after fertilization (hpf) in rapidly proliferating tissues, including the tectum, retina and brachial arches. Preferentially expressed in the liver bud and expression is maintained in the fully developed liver. Also expressed in the proximal gut. In adult, the highest expression is detected in testis.

Its subcellular location is the nucleus. It is found in the cytoplasm. The catalysed reaction is S-ubiquitinyl-[E2 ubiquitin-conjugating enzyme]-L-cysteine + [acceptor protein]-L-lysine = [E2 ubiquitin-conjugating enzyme]-L-cysteine + N(6)-ubiquitinyl-[acceptor protein]-L-lysine.. The protein operates within protein modification; protein ubiquitination. In terms of biological role, multidomain protein that acts as a key epigenetic regulator by bridging DNA methylation and chromatin modification. Specifically recognizes and binds hemimethylated DNA at replication forks via its YDG domain and recruits dnmt1 methyltransferase to ensure faithful propagation of the DNA methylation patterns through DNA replication. In addition to its role in maintenance of DNA methylation, also plays a key role in chromatin modification: through its tudor-like regions and PHD-type zinc fingers, specifically recognizes and binds histone H3 trimethylated at 'Lys-9' (H3K9me3) and unmethylated at 'Arg-2' (H3R2me0), respectively, and recruits chromatin proteins. Enriched in pericentric heterochromatin where it recruits different chromatin modifiers required for this chromatin replication. Also localizes to euchromatic regions where it negatively regulates transcription possibly by impacting DNA methylation and histone modifications. Has E3 ubiquitin-protein ligase activity by mediating the ubiquitination of target proteins. However, it is still unclear how E3 ubiquitin-protein ligase activity is related to its role in chromatin in vivo. Required for pregastrula and lens development. The polypeptide is E3 ubiquitin-protein ligase UHRF1 (uhrf1) (Danio rerio (Zebrafish)).